Consider the following 322-residue polypeptide: N-acetyl-gamma-glutamyl-phosphate reductase (322 aa).

Cys-117 is an active-site residue.

It belongs to the NAGSA dehydrogenase family. Type 2 subfamily.

The protein resides in the cytoplasm. It carries out the reaction N-acetyl-L-glutamate 5-semialdehyde + phosphate + NADP(+) = N-acetyl-L-glutamyl 5-phosphate + NADPH + H(+). It functions in the pathway amino-acid biosynthesis; L-arginine biosynthesis; N(2)-acetyl-L-ornithine from L-glutamate: step 3/4. Catalyzes the NADPH-dependent reduction of N-acetyl-5-glutamyl phosphate to yield N-acetyl-L-glutamate 5-semialdehyde. This chain is N-acetyl-gamma-glutamyl-phosphate reductase, found in Trichormus variabilis (strain ATCC 29413 / PCC 7937) (Anabaena variabilis).